The sequence spans 65 residues: Large ribosomal subunit protein uL29 (65 aa).

Belongs to the universal ribosomal protein uL29 family.

The polypeptide is Large ribosomal subunit protein uL29 (rpmC) (Borreliella burgdorferi (strain ATCC 35210 / DSM 4680 / CIP 102532 / B31) (Borrelia burgdorferi)).